We begin with the raw amino-acid sequence, 188 residues long: Acireductone dioxygenase (188 aa).

Positions 97, 99, 103, and 141 each coordinate Fe(2+). The Ni(2+) site is built by H97, H99, E103, and H141.

It belongs to the acireductone dioxygenase (ARD) family. Monomer. Fe(2+) is required as a cofactor. The cofactor is Ni(2+).

It carries out the reaction 1,2-dihydroxy-5-(methylsulfanyl)pent-1-en-3-one + O2 = 3-(methylsulfanyl)propanoate + CO + formate + 2 H(+). The catalysed reaction is 1,2-dihydroxy-5-(methylsulfanyl)pent-1-en-3-one + O2 = 4-methylsulfanyl-2-oxobutanoate + formate + 2 H(+). Its pathway is amino-acid biosynthesis; L-methionine biosynthesis via salvage pathway; L-methionine from S-methyl-5-thio-alpha-D-ribose 1-phosphate: step 5/6. Catalyzes 2 different reactions between oxygen and the acireductone 1,2-dihydroxy-3-keto-5-methylthiopentene (DHK-MTPene) depending upon the metal bound in the active site. Fe-containing acireductone dioxygenase (Fe-ARD) produces formate and 2-keto-4-methylthiobutyrate (KMTB), the alpha-ketoacid precursor of methionine in the methionine recycle pathway. Ni-containing acireductone dioxygenase (Ni-ARD) produces methylthiopropionate, carbon monoxide and formate, and does not lie on the methionine recycle pathway. This Xanthomonas oryzae pv. oryzae (strain MAFF 311018) protein is Acireductone dioxygenase.